A 295-amino-acid polypeptide reads, in one-letter code: RNA polymerase sigma-C factor (295 aa).

Residues 73–86 (DLIQEANIGLMKAV) carry the Polymerase core binding motif. Residues 250–269 (LSELGEHFGFSRERARQLEI) constitute a DNA-binding region (H-T-H motif).

It belongs to the sigma-70 factor family.

Its function is as follows. Sigma factors are initiation factors that promote the attachment of RNA polymerase to specific initiation sites and are then released. This sigma factor is essential for normal fruiting body formation. This chain is RNA polymerase sigma-C factor (sigC), found in Myxococcus xanthus.